A 137-amino-acid chain; its full sequence is Putative pre-16S rRNA nuclease (137 aa).

The protein belongs to the YqgF nuclease family.

Its subcellular location is the cytoplasm. Could be a nuclease involved in processing of the 5'-end of pre-16S rRNA. The protein is Putative pre-16S rRNA nuclease of Buchnera aphidicola subsp. Baizongia pistaciae (strain Bp).